The primary structure comprises 400 residues: Subtilisin-like protease CPC735_013700 (400 aa).

The N-terminal stretch at 1 to 19 (MGFVKILSLSLAATAVADA) is a signal peptide. Residues 20–116 (ATILSPRYPN…IEPNQIVTIS (97 aa)) constitute a propeptide that is removed on maturation. Residues 36–115 (YIVVMKDGVS…FIEPNQIVTI (80 aa)) enclose the Inhibitor I9 domain. One can recognise a Peptidase S8 domain in the interval 126–400 (SWGLPRISVK…RKLLYNNSGK (275 aa)). Residues Asp161 and His192 each act as charge relay system in the active site. A glycan (N-linked (GlcNAc...) asparagine) is linked at Asn252. Ser346 acts as the Charge relay system in catalysis. The N-linked (GlcNAc...) asparagine glycan is linked to Asn396.

It belongs to the peptidase S8 family.

Its subcellular location is the secreted. Functionally, secreted subtilisin-like serine protease with keratinolytic activity that contributes to pathogenicity. This Coccidioides posadasii (strain C735) (Valley fever fungus) protein is Subtilisin-like protease CPC735_013700.